The sequence spans 686 residues: tRNA 5-methylaminomethyl-2-thiouridine biosynthesis bifunctional protein MnmC (686 aa).

Residues 1 to 258 (MPNIPLRVNS…RRALRRQQLD (258 aa)) are tRNA (mnm(5)s(2)U34)-methyltransferase. Positions 276-686 (IGGGVASANL…MRKLIKGKAL (411 aa)) are FAD-dependent cmnm(5)s(2)U34 oxidoreductase.

The protein in the N-terminal section; belongs to the methyltransferase superfamily. tRNA (mnm(5)s(2)U34)-methyltransferase family. In the C-terminal section; belongs to the DAO family. FAD serves as cofactor.

It is found in the cytoplasm. It carries out the reaction 5-aminomethyl-2-thiouridine(34) in tRNA + S-adenosyl-L-methionine = 5-methylaminomethyl-2-thiouridine(34) in tRNA + S-adenosyl-L-homocysteine + H(+). Functionally, catalyzes the last two steps in the biosynthesis of 5-methylaminomethyl-2-thiouridine (mnm(5)s(2)U) at the wobble position (U34) in tRNA. Catalyzes the FAD-dependent demodification of cmnm(5)s(2)U34 to nm(5)s(2)U34, followed by the transfer of a methyl group from S-adenosyl-L-methionine to nm(5)s(2)U34, to form mnm(5)s(2)U34. The chain is tRNA 5-methylaminomethyl-2-thiouridine biosynthesis bifunctional protein MnmC from Shewanella loihica (strain ATCC BAA-1088 / PV-4).